The following is an 802-amino-acid chain: Phenylalanine--tRNA ligase beta subunit (802 aa).

Residues 40 to 155 enclose the tRNA-binding domain; the sequence is SASLKNVVVG…EHVETGVSAI (116 aa). The B5 domain maps to 409-484; it reads KAVNKIETSL…RIYGYDEIPV (76 aa). 4 residues coordinate Mg(2+): aspartate 462, aspartate 468, glutamate 471, and glutamate 472. In terms of domain architecture, FDX-ACB spans 709–802; sequence PRYPEMTRDL…LQAKLHAIIR (94 aa).

This sequence belongs to the phenylalanyl-tRNA synthetase beta subunit family. Type 1 subfamily. Tetramer of two alpha and two beta subunits. Mg(2+) is required as a cofactor.

It localises to the cytoplasm. It catalyses the reaction tRNA(Phe) + L-phenylalanine + ATP = L-phenylalanyl-tRNA(Phe) + AMP + diphosphate + H(+). The chain is Phenylalanine--tRNA ligase beta subunit from Listeria innocua serovar 6a (strain ATCC BAA-680 / CLIP 11262).